A 116-amino-acid polypeptide reads, in one-letter code: Large ribosomal subunit protein bL19 (116 aa).

The protein belongs to the bacterial ribosomal protein bL19 family.

This protein is located at the 30S-50S ribosomal subunit interface and may play a role in the structure and function of the aminoacyl-tRNA binding site. The sequence is that of Large ribosomal subunit protein bL19 from Clostridium botulinum (strain Eklund 17B / Type B).